Here is a 527-residue protein sequence, read N- to C-terminus: Ribosomal protein S6 kinase beta-1 (527 aa).

The segment at 1–54 (MRRRRRRDGFYPAPDFRDREAEDMAGVFDIDLDQPEDAGSEDELEEGGQLNESM) is disordered. The short motif at 28–32 (FDIDL) is the TOS motif element. Residues 30–46 (IDLDQPEDAGSEDELEE) show a composition bias toward acidic residues. The 262-residue stretch at 91–352 (FELLRVLGKG…AGEVQAHPFF (262 aa)) folds into the Protein kinase domain. Residues 97–105 (LGKGGYGKV) and Lys123 contribute to the ATP site. Catalysis depends on Asp218, which acts as the Proton acceptor. Phosphothreonine; by PDPK1 is present on Thr252. Positions 353–423 (RHINWEELLA…VAPSVLESVK (71 aa)) constitute an AGC-kinase C-terminal domain. The residue at position 394 (Ser394) is a Phosphoserine. Thr412 carries the post-translational modification Phosphothreonine; by MTOR, NEK6 and NEK7. The tract at residues 424-527 (EKFSFEPKIR…PEHLRMNLEL (104 aa)) is autoinhibitory domain. 2 positions are modified to phosphoserine: Ser434 and Ser441. A Phosphothreonine modification is found at Thr444. 2 positions are modified to phosphoserine: Ser447 and Ser452. An N6-acetyllysine modification is found at Lys516.

It belongs to the protein kinase superfamily. AGC Ser/Thr protein kinase family. S6 kinase subfamily. As to quaternary structure, interacts with PPP1R9A/neurabin-1. Interacts with RPTOR. Interacts with IRS1. Interacts with EIF3B and EIF3C. Interacts with TRAF4. Interacts with POLDIP3. Interacts (via N-terminus) with IER5. In terms of processing, phosphorylation at Thr-412 is regulated by mTORC1. The phosphorylation at this site is maintained by an agonist-dependent autophosphorylation mechanism. Activated by phosphorylation at Thr-252 by PDPK1. Dephosphorylation by PPP1CC at Thr-412 in mitochondrion.

The protein localises to the cytoplasm. The protein resides in the synapse. It is found in the synaptosome. It localises to the mitochondrion outer membrane. Its subcellular location is the mitochondrion. The catalysed reaction is L-seryl-[protein] + ATP = O-phospho-L-seryl-[protein] + ADP + H(+). The enzyme catalyses L-threonyl-[protein] + ATP = O-phospho-L-threonyl-[protein] + ADP + H(+). With respect to regulation, inactivated by binding to URI1. Activation requires multiple phosphorylation events on serine/threonine residues. Activation appears to be first mediated by phosphorylation of multiple sites in the autoinhibitory domain, which facilitates phosphorylation at Thr-412, disrupting the autoinhibitory mechanism and allowing phosphorylation of Thr-252 by PDPK1. The active conformation of the kinase is believed to be stabilized by a mechanism involving three conserved phosphorylation sites located in the kinase domain activation loop (Thr-252) and in the AGC-kinase C-terminal domain (Ser-394 in the middle of the tail/linker region and Thr-412 within a hydrophobic motif at its end). Activated by mTORC1; isoform Alpha I and isoform Alpha II are sensitive to rapamycin, which inhibits activating phosphorylation at Thr-412. Activated by PDPK1. Its function is as follows. Serine/threonine-protein kinase that acts downstream of mTOR signaling in response to growth factors and nutrients to promote cell proliferation, cell growth and cell cycle progression. Regulates protein synthesis through phosphorylation of EIF4B, RPS6 and EEF2K, and contributes to cell survival by repressing the pro-apoptotic function of BAD. Under conditions of nutrient depletion, the inactive form associates with the EIF3 translation initiation complex. Upon mitogenic stimulation, phosphorylation by the mechanistic target of rapamycin complex 1 (mTORC1) leads to dissociation from the EIF3 complex and activation. The active form then phosphorylates and activates several substrates in the pre-initiation complex, including the EIF2B complex and the cap-binding complex component EIF4B. Also controls translation initiation by phosphorylating a negative regulator of EIF4A, PDCD4, targeting it for ubiquitination and subsequent proteolysis. Promotes initiation of the pioneer round of protein synthesis by phosphorylating POLDIP3/SKAR. In response to IGF1, activates translation elongation by phosphorylating EEF2 kinase (EEF2K), which leads to its inhibition and thus activation of EEF2. Also plays a role in feedback regulation of mTORC2 by mTORC1 by phosphorylating MAPKAP1/SIN1, MTOR and RICTOR, resulting in the inhibition of mTORC2 and AKT1 signaling. Also involved in feedback regulation of mTORC1 and mTORC2 by phosphorylating DEPTOR. Mediates cell survival by phosphorylating the pro-apoptotic protein BAD and suppressing its pro-apoptotic function. Phosphorylates mitochondrial URI1 leading to dissociation of a URI1-PPP1CC complex. The free mitochondrial PPP1CC can then dephosphorylate RPS6KB1 at Thr-412, which is proposed to be a negative feedback mechanism for the RPS6KB1 anti-apoptotic function. Mediates TNF-alpha-induced insulin resistance by phosphorylating IRS1 at multiple serine residues, resulting in accelerated degradation of IRS1. In cells lacking functional TSC1-2 complex, constitutively phosphorylates and inhibits GSK3B. May be involved in cytoskeletal rearrangement through binding to neurabin. Phosphorylates and activates the pyrimidine biosynthesis enzyme CAD, downstream of MTOR. Following activation by mTORC1, phosphorylates EPRS and thereby plays a key role in fatty acid uptake by adipocytes and also most probably in interferon-gamma-induced translation inhibition. This Bos taurus (Bovine) protein is Ribosomal protein S6 kinase beta-1 (RPS6KB1).